The following is a 261-amino-acid chain: Tryptophan synthase alpha chain (261 aa).

Active-site proton acceptor residues include Glu49 and Asp60.

The protein belongs to the TrpA family. Tetramer of two alpha and two beta chains.

It carries out the reaction (1S,2R)-1-C-(indol-3-yl)glycerol 3-phosphate + L-serine = D-glyceraldehyde 3-phosphate + L-tryptophan + H2O. The protein operates within amino-acid biosynthesis; L-tryptophan biosynthesis; L-tryptophan from chorismate: step 5/5. Functionally, the alpha subunit is responsible for the aldol cleavage of indoleglycerol phosphate to indole and glyceraldehyde 3-phosphate. This Leifsonia xyli subsp. xyli (strain CTCB07) protein is Tryptophan synthase alpha chain.